A 393-amino-acid chain; its full sequence is Formate-dependent phosphoribosylglycinamide formyltransferase (393 aa).

Residues 22–23 (EL) and E82 each bind N(1)-(5-phospho-beta-D-ribosyl)glycinamide. Residues R114, K155, 160–165 (SSGHGQ), 195–198 (EGFI), and E203 each bind ATP. The ATP-grasp domain maps to 119-308 (RLAAEELGLK…QFALHARAIL (190 aa)). Mg(2+) contacts are provided by E267 and E279. Residues D286, K356, and 363–364 (RR) contribute to the N(1)-(5-phospho-beta-D-ribosyl)glycinamide site.

The protein belongs to the PurK/PurT family. In terms of assembly, homodimer.

The catalysed reaction is N(1)-(5-phospho-beta-D-ribosyl)glycinamide + formate + ATP = N(2)-formyl-N(1)-(5-phospho-beta-D-ribosyl)glycinamide + ADP + phosphate + H(+). The protein operates within purine metabolism; IMP biosynthesis via de novo pathway; N(2)-formyl-N(1)-(5-phospho-D-ribosyl)glycinamide from N(1)-(5-phospho-D-ribosyl)glycinamide (formate route): step 1/1. Functionally, involved in the de novo purine biosynthesis. Catalyzes the transfer of formate to 5-phospho-ribosyl-glycinamide (GAR), producing 5-phospho-ribosyl-N-formylglycinamide (FGAR). Formate is provided by PurU via hydrolysis of 10-formyl-tetrahydrofolate. This Actinobacillus pleuropneumoniae serotype 5b (strain L20) protein is Formate-dependent phosphoribosylglycinamide formyltransferase.